Here is a 336-residue protein sequence, read N- to C-terminus: Glycerol-3-phosphate dehydrogenase [NAD(P)+] (336 aa).

Residues serine 16, tyrosine 17, histidine 37, and lysine 111 each contribute to the NADPH site. The sn-glycerol 3-phosphate site is built by lysine 111, glycine 140, and threonine 142. Alanine 144 is a binding site for NADPH. Positions 196, 249, 259, 260, and 261 each coordinate sn-glycerol 3-phosphate. Lysine 196 functions as the Proton acceptor in the catalytic mechanism. Arginine 260 is a binding site for NADPH. NADPH contacts are provided by valine 284 and glutamate 286.

This sequence belongs to the NAD-dependent glycerol-3-phosphate dehydrogenase family.

The protein resides in the cytoplasm. The catalysed reaction is sn-glycerol 3-phosphate + NAD(+) = dihydroxyacetone phosphate + NADH + H(+). The enzyme catalyses sn-glycerol 3-phosphate + NADP(+) = dihydroxyacetone phosphate + NADPH + H(+). The protein operates within membrane lipid metabolism; glycerophospholipid metabolism. Functionally, catalyzes the reduction of the glycolytic intermediate dihydroxyacetone phosphate (DHAP) to sn-glycerol 3-phosphate (G3P), the key precursor for phospholipid synthesis. This is Glycerol-3-phosphate dehydrogenase [NAD(P)+] from Haemophilus ducreyi (strain 35000HP / ATCC 700724).